A 1571-amino-acid polypeptide reads, in one-letter code: Neurexin-3 (1571 aa).

Positions 1 to 27 (MSFTLHSVFFTLKVSIFLGSLVGLCLG) are cleaved as a signal peptide. In terms of domain architecture, Laminin G-like 1 spans 28–202 (LEFMGLPNQW…SVQLEAEGPC (175 aa)). The Extracellular segment spans residues 28–1496 (LEFMGLPNQW…EVIRESSSTT (1469 aa)). Residues Asn58 and Asn105 are each glycosylated (N-linked (GlcNAc...) asparagine). Residues 198–235 (AEGPCGERPCENGGICFLLDGHPTCDCSTTGYGGTLCS) enclose the EGF-like 1 domain. Disulfide bonds link Cys202–Cys213, Cys207–Cys222, and Cys224–Cys234. Laminin G-like domains lie at 258 to 440 (VATF…VFKC) and 447 to 639 (DPIN…KSSC). The Ca(2+) site is built by Asp304, Leu321, and Met374. 5 disulfides stabilise this stretch: Cys404–Cys440, Cys610–Cys639, Cys647–Cys658, Cys652–Cys667, and Cys669–Cys679. Residues 643-680 (SAKQCDSYPCKNNAVCKDGWNRFICDCTGTGYWGRTCE) form the EGF-like 2 domain. Laminin G-like domains follow at residues 685-857 (ILSY…IDYC) and 871-1046 (DPVT…ERGC). Positions 732 and 749 each coordinate Ca(2+). An N-linked (GlcNAc...) asparagine glycan is attached at Asn757. Arg807 is a binding site for Ca(2+). Intrachain disulfides connect Cys1018–Cys1046, Cys1053–Cys1064, Cys1058–Cys1073, and Cys1075–Cys1085. One can recognise an EGF-like 3 domain in the interval 1049-1086 (PSTTCQEDSCANQGVCMQQWEGFTCDCSMTSYSGNQCN). The Laminin G-like 6 domain occupies 1090–1290 (ATYIFGKSGG…NPNIKINGSV (201 aa)). Asp1142 and Ile1159 together coordinate Ca(2+). Asn1189 carries N-linked (GlcNAc...) asparagine glycosylation. Positions 1241 and 1243 each coordinate Ca(2+). N-linked (GlcNAc...) asparagine glycans are attached at residues Asn1287 and Asn1331. Residues 1324–1348 (ATTTTRKNRSTASIQPTSDDLVSSA) form a disordered region. The span at 1333–1348 (STASIQPTSDDLVSSA) shows a compositional bias: polar residues. The O-linked (Xyl...) (heparan sulfate) serine glycan is linked to Ser1347. Residues 1497-1517 (GMVVGIVAAAALCILILLYAM) form a helical membrane-spanning segment. Residues 1518–1571 (YKYRNRDEGSYQVDETRNYISNSAQSNGTLMKEKQASSKSGHKKQKNKDKEYYV) are Cytoplasmic-facing. Residues 1539 to 1571 (NSAQSNGTLMKEKQASSKSGHKKQKNKDKEYYV) form a disordered region.

This sequence belongs to the neurexin family. In terms of assembly, the laminin G-like domain 2 binds to NXPH1. Specific isoforms bind to alpha-dystroglycan. The cytoplasmic C-terminal region binds to CASK. Specific isoforms bind neuroligins NLGN1, NLGN2 and NLGN3. Interacts with CLSTN3. Post-translationally, O-glycosylated; contains heparan sulfate. Heparan sulfate attachment is required for synapse development by mediating interactions with neuroligins. In terms of tissue distribution, brain and arteries (at protein level).

It is found in the presynaptic cell membrane. Neuronal cell surface protein that may be involved in cell recognition and cell adhesion. May mediate intracellular signaling. This Mus musculus (Mouse) protein is Neurexin-3 (Nrxn3).